The following is a 64-amino-acid chain: DNA-directed RNA polymerase subunit Rpo10 (64 aa).

4 residues coordinate Zn(2+): cysteine 7, cysteine 10, cysteine 45, and cysteine 46.

The protein belongs to the archaeal Rpo10/eukaryotic RPB10 RNA polymerase subunit family. As to quaternary structure, part of the RNA polymerase complex. The cofactor is Zn(2+).

The protein resides in the cytoplasm. The catalysed reaction is RNA(n) + a ribonucleoside 5'-triphosphate = RNA(n+1) + diphosphate. In terms of biological role, DNA-dependent RNA polymerase (RNAP) catalyzes the transcription of DNA into RNA using the four ribonucleoside triphosphates as substrates. The protein is DNA-directed RNA polymerase subunit Rpo10 of Natronomonas pharaonis (strain ATCC 35678 / DSM 2160 / CIP 103997 / JCM 8858 / NBRC 14720 / NCIMB 2260 / Gabara) (Halobacterium pharaonis).